The primary structure comprises 337 residues: Pentalenene synthase (337 aa).

Mg(2+) contacts are provided by Asp80, Asp84, Asn219, Ser223, and Glu227. A DDXXD motif motif is present at residues 80–84 (DDLFD).

Belongs to the terpene synthase family. Monomer. Mg(2+) serves as cofactor.

It carries out the reaction (2E,6E)-farnesyl diphosphate = pentalenene + diphosphate. Its pathway is sesquiterpene biosynthesis; pentalenene biosynthesis; pentalenene from farnesyl diphosphate: step 1/1. It participates in antibiotic biosynthesis; pentalenolactone biosynthesis. In terms of biological role, catalyzes the cyclization of farnesyl diphosphate (FPP) to the tricyclic sesquiterpene pentalenene, which is the hydrocarbon precursor of the pentalenolactone family of antibiotics produced by a variety of Streptomyces species. The sequence is that of Pentalenene synthase (pntA) from Streptomyces arenae.